The sequence spans 237 residues: Corrinoid adenosyltransferase MMAB (237 aa).

The transit peptide at 1–26 (MAVWLFGGRLGLRGRLSACRLLCPRF) directs the protein to the mitochondrion. Residues 30–49 (GPQGGEDGDRLQPSSTAAKI) are disordered. Residues 54–57 (TKTG), 62–63 (SS), and Lys72 contribute to the ATP site. Ser128 bears the Phosphoserine mark. 184–188 (RRAER) is a binding site for ATP. Lys205 bears the N6-succinyllysine mark. Residue Asn208 participates in ATP binding. Lys224 carries the post-translational modification N6-acetyllysine; alternate. Lys224 bears the N6-succinyllysine; alternate mark.

It belongs to the Cob(I)alamin adenosyltransferase family. In terms of assembly, homotrimer.

The protein localises to the mitochondrion. The catalysed reaction is cob(I)alamin-[corrinoid adenosyltransferase] + ATP = apo-[corrinoid adenosyltransferase] + adenosylcob(III)alamin + triphosphate. Converts cob(I)alamin to adenosylcobalamin (adenosylcob(III)alamin), a coenzyme for methylmalonyl-CoA mutase, therefore participates in the final step of the vitamin B12 conversion. Generates adenosylcobalamin (AdoCbl) and directly delivers the cofactor to MUT in a transfer that is stimulated by ATP-binding to MMAB and gated by MMAA. This is Corrinoid adenosyltransferase MMAB from Mus musculus (Mouse).